Consider the following 193-residue polypeptide: Ion-translocating oxidoreductase complex subunit A (193 aa).

Transmembrane regions (helical) follow at residues 5 to 25 (ILLIISTALINNFVLVKFLGL), 39 to 59 (IGMGMATTFVLTVASLSAYLV), 65 to 85 (IPLEAQFLRTLVFILVIAVIV), 102 to 122 (LLGIYLPLITTNCAVLGVALL), 134 to 154 (VLYGFGAALGFSLVLVLFAAL), and 171 to 191 (SIALITAGLMSLAFMGFTGLV).

This sequence belongs to the NqrDE/RnfAE family. The complex is composed of six subunits: RnfA, RnfB, RnfC, RnfD, RnfE and RnfG.

The protein resides in the cell inner membrane. Its function is as follows. Part of a membrane-bound complex that couples electron transfer with translocation of ions across the membrane. The polypeptide is Ion-translocating oxidoreductase complex subunit A (Actinobacillus pleuropneumoniae serotype 5b (strain L20)).